The sequence spans 310 residues: Haloalkane dehalogenase (310 aa).

In terms of domain architecture, AB hydrolase-1 spans 49-295 (VFLCLHGEPT…DAGHFVQEFG (247 aa)). The active-site Nucleophile is the D124. Chloride contacts are provided by W125 and W175. The active-site Proton donor is D260. H289 (proton acceptor) is an active-site residue.

It belongs to the haloalkane dehalogenase family. Type 1 subfamily. Monomer.

It catalyses the reaction 1-haloalkane + H2O = a halide anion + a primary alcohol + H(+). The enzyme catalyses 1,2-dichloroethane + H2O = 2-chloroethanol + chloride + H(+). It participates in xenobiotic degradation; 1,2-dichloroethane degradation; glycolate from 1,2-dichloroethane: step 1/4. Its activity is regulated as follows. Inhibited by thiol reagents such as p-chloromercuribenzoate and iodoacetamide. Functionally, catalyzes hydrolytic cleavage of carbon-halogen bonds in halogenated aliphatic compounds, leading to the formation of the corresponding primary alcohols, halide ions and protons. Has a broad substrate specificity, which includes terminally mono- and di- chlorinated and brominated alkanes (up to C4 only). The highest activity was found with 1,2-dichloroethane, 1,3-dichloropropane, and 1,2-dibromoethane. This chain is Haloalkane dehalogenase (dhlA), found in Xanthobacter autotrophicus.